An 81-amino-acid chain; its full sequence is Acyl carrier protein (81 aa).

The Carrier domain maps to 2-77; that stretch reads ASIEERVVDI…EAIDFIEKEK (76 aa). Ser37 carries the post-translational modification O-(pantetheine 4'-phosphoryl)serine.

The protein belongs to the acyl carrier protein (ACP) family. 4'-phosphopantetheine is transferred from CoA to a specific serine of apo-ACP by AcpS. This modification is essential for activity because fatty acids are bound in thioester linkage to the sulfhydryl of the prosthetic group.

The protein resides in the cytoplasm. The protein operates within lipid metabolism; fatty acid biosynthesis. In terms of biological role, carrier of the growing fatty acid chain in fatty acid biosynthesis. This Rhodopirellula baltica (strain DSM 10527 / NCIMB 13988 / SH1) protein is Acyl carrier protein.